The chain runs to 490 residues: 3-octaprenyl-4-hydroxybenzoate carboxy-lyase (490 aa).

N172 lines the Mn(2+) pocket. Prenylated FMN is bound by residues 175-177 (IYR), 189-191 (RWL), and 194-195 (RG). Position 238 (E238) interacts with Mn(2+). Residue D287 is the Proton donor of the active site.

This sequence belongs to the UbiD family. Homohexamer. It depends on prenylated FMN as a cofactor. The cofactor is Mn(2+).

The protein resides in the cell membrane. It catalyses the reaction a 4-hydroxy-3-(all-trans-polyprenyl)benzoate + H(+) = a 2-(all-trans-polyprenyl)phenol + CO2. The protein operates within cofactor biosynthesis; ubiquinone biosynthesis. Catalyzes the decarboxylation of 3-octaprenyl-4-hydroxy benzoate to 2-octaprenylphenol, an intermediate step in ubiquinone biosynthesis. The polypeptide is 3-octaprenyl-4-hydroxybenzoate carboxy-lyase (Idiomarina loihiensis (strain ATCC BAA-735 / DSM 15497 / L2-TR)).